Here is a 520-residue protein sequence, read N- to C-terminus: Phosphoenolpyruvate carboxykinase (ATP) (520 aa).

Residues R61, F196, and K202 each coordinate substrate. Residues K202, H222, and G238–T246 each bind ATP. The Mn(2+) site is built by K202 and H222. D259 is a Mn(2+) binding site. Residues E287, R324, R443–I444, and T449 contribute to the ATP site. Residue R324 participates in substrate binding.

Belongs to the phosphoenolpyruvate carboxykinase (ATP) family. The cofactor is Mn(2+).

It is found in the cytoplasm. It catalyses the reaction oxaloacetate + ATP = phosphoenolpyruvate + ADP + CO2. It participates in carbohydrate biosynthesis; gluconeogenesis. Functionally, involved in the gluconeogenesis. Catalyzes the conversion of oxaloacetate (OAA) to phosphoenolpyruvate (PEP) through direct phosphoryl transfer between the nucleoside triphosphate and OAA. This chain is Phosphoenolpyruvate carboxykinase (ATP), found in Amoebophilus asiaticus (strain 5a2).